Here is a 169-residue protein sequence, read N- to C-terminus: Flagellar biosynthetic protein FliU (169 aa).

This sequence belongs to the FliB family.

Its function is as follows. Required for the secretion of flagellin and expression of motility. The sequence is that of Flagellar biosynthetic protein FliU (fliU) from Salmonella muenchen.